The following is a 342-amino-acid chain: Ketol-acid reductoisomerase (NADP(+)) (342 aa).

Residues 2–182 form the KARI N-terminal Rossmann domain; that stretch reads AELFYDDDAD…GGLRAAGIKT (181 aa). Residues 25–28, arginine 48, serine 51, serine 53, and 83–86 each bind NADP(+); these read YGSQ and DQHQ. Histidine 108 is an active-site residue. Residue glycine 134 coordinates NADP(+). Residues 183-328 form the KARI C-terminal knotted domain; that stretch reads TFTEETETDL…RELRKLFAWV (146 aa). 4 residues coordinate Mg(2+): aspartate 191, glutamate 195, glutamate 227, and glutamate 231. Serine 252 is a substrate binding site.

Belongs to the ketol-acid reductoisomerase family. Mg(2+) serves as cofactor.

It catalyses the reaction (2R)-2,3-dihydroxy-3-methylbutanoate + NADP(+) = (2S)-2-acetolactate + NADPH + H(+). The catalysed reaction is (2R,3R)-2,3-dihydroxy-3-methylpentanoate + NADP(+) = (S)-2-ethyl-2-hydroxy-3-oxobutanoate + NADPH + H(+). Its pathway is amino-acid biosynthesis; L-isoleucine biosynthesis; L-isoleucine from 2-oxobutanoate: step 2/4. It functions in the pathway amino-acid biosynthesis; L-valine biosynthesis; L-valine from pyruvate: step 2/4. In terms of biological role, involved in the biosynthesis of branched-chain amino acids (BCAA). Catalyzes an alkyl-migration followed by a ketol-acid reduction of (S)-2-acetolactate (S2AL) to yield (R)-2,3-dihydroxy-isovalerate. In the isomerase reaction, S2AL is rearranged via a Mg-dependent methyl migration to produce 3-hydroxy-3-methyl-2-ketobutyrate (HMKB). In the reductase reaction, this 2-ketoacid undergoes a metal-dependent reduction by NADPH to yield (R)-2,3-dihydroxy-isovalerate. This is Ketol-acid reductoisomerase (NADP(+)) from Beutenbergia cavernae (strain ATCC BAA-8 / DSM 12333 / CCUG 43141 / JCM 11478 / NBRC 16432 / NCIMB 13614 / HKI 0122).